The chain runs to 952 residues: MTNPSEGTTPLAFRYTPELANKIEGEWQNYWTDNGTFNAPNPVGDLAPADGKALPEDKLFVQDMFPYPSGAGLHVGHPLGYIATDVFARYNRMLGKNVLHTLGYDAFGLPAEQYAIQTGTHPRTTTMANIENMKRQLGALGLGHDSRRAVATTDPEFYKWTQWIFLQIFNSWFDAEQQKARPISELIPLLESGELKTKDGADYNALGDVEKQKAVDDYRLVYRSNSTVNWCPGLGTVLANEEVTADGRSERGNFPVFRKNLSQWMMRITAYSDRLIDDLELLDWTEKVKSMQRNWIGRSRGAEVDFSAEGETVTVFTTRPDTLFGATYMVLAPEHELVDVLLEKAGSYEGVDARWTNGQASPAEAVAAYRASIAAKSDLERQENKEKTGVFLGVYATNPVNGDQIPVFIADYVLTGYGTGAIMAVPAHDERDYEFATVLGLPIKEVVAGGNIEEAAFTESGEAVNSANDNGLDINGLAKDEAVAKTIEWLEEKELGRGTIQYKLRDWLFARQRYWGEPFPIVYDENGQAHALPDSMLPVELPEVEDYKPVSFDPEDADSEPSPPLAKAREWVEVELDLGDGKKKYTRDTNVMPQWAGSSWYQLRYVDPSNDEQFCNIENERYWTGPRPETHGPNDPGGVDLYVGGVEHAVLHLLYARFWHKVLFDLGHVSSKEPYRRLYNQGYIQAFAYTDSRGVYVPADDVEEKDGKFFYQGEEVNQEYGKMGKSLKNAVAPDDICNNFGADTLRVYEMAMGPLDTSRPWATKDVVGAQRFLQRLWRLVVDENTGEVLTRDEVLTDDDNKQLHRTIAGVRDDYTNLRVNTVVAKLIEYVNYLTKTYPDTIPAGAVLPLIVMVSPVAPHIAEELWKKLGHDDTVTYEPFPTFEEKWLTDDEIELPVQVNGKVRGRITVAADASQEQVIEAALADEKVQEQISGKNLIKQIVVPGRMVNLVVK.

Residues 66–77 (PYPSGAGLHVGH) carry the 'HIGH' region motif. The 'KMSKS' region signature appears at 722–726 (KMGKS). Lys-725 is a binding site for ATP.

This sequence belongs to the class-I aminoacyl-tRNA synthetase family.

The protein localises to the cytoplasm. It catalyses the reaction tRNA(Leu) + L-leucine + ATP = L-leucyl-tRNA(Leu) + AMP + diphosphate. The sequence is that of Leucine--tRNA ligase from Corynebacterium glutamicum (strain R).